Reading from the N-terminus, the 135-residue chain is Large ribosomal subunit protein eL27x (135 aa).

Belongs to the eukaryotic ribosomal protein eL27 family.

This chain is Large ribosomal subunit protein eL27x (RPL27C), found in Arabidopsis thaliana (Mouse-ear cress).